The chain runs to 420 residues: Phosphoribosylamine--glycine ligase (420 aa).

The 207-residue stretch at 108 to 314 (KEIMVKYGVP…FAQNITDILD (207 aa)) folds into the ATP-grasp domain. 134 to 195 (IEKHGAPIVV…EEFLEGEEFS (62 aa)) is an ATP binding site. Positions 284 and 286 each coordinate Mg(2+).

It belongs to the GARS family. It depends on Mg(2+) as a cofactor. The cofactor is Mn(2+).

It catalyses the reaction 5-phospho-beta-D-ribosylamine + glycine + ATP = N(1)-(5-phospho-beta-D-ribosyl)glycinamide + ADP + phosphate + H(+). It participates in purine metabolism; IMP biosynthesis via de novo pathway; N(1)-(5-phospho-D-ribosyl)glycinamide from 5-phospho-alpha-D-ribose 1-diphosphate: step 2/2. This chain is Phosphoribosylamine--glycine ligase, found in Streptococcus pneumoniae serotype 4 (strain ATCC BAA-334 / TIGR4).